Reading from the N-terminus, the 1225-residue chain is MPFYRRTVVPQRLCPRNPPQQLAELRDVSHLAALSLLRQLADLCGHSLALLEDLEGHLLALGRRTDSLYRRTVRLRRRLPCRLLGPEEDEEELAAANSGRENATATAHSRSSWRQPVNVFLSSGRPPSVEELLREAQLNLQSLLQEEYEEQYSEARLVGQTFRSSDEATKPTPNPRPQSARRLEFILMPTKRQLSEDETTTQGVRAPEASLSLSTTADKQTAWNSLFPLPILEEKRWPQLCSTQSDIVPINISGQQFDKHASLRHSLFNTETAVNPKSTLRRRRTIIGFSNFSQRDQGHSNSPAGSVAHSTTSDIRPSHSVPEGVHGRVAVGQDARFPSLTSPVLRTPSSEPDEPHQARSGPNPPGMESMGMVYSVPSSCNGPTESTFSTSWKGDAFTYMTPSATSQSNQVNENGKNPSCGNSWVSLNKVPPLVPKEAATLLVARDNPAGCSGSAGYPERLIQQRHMPERPSKIGLLTSGTSRLETGPGGASRFRERSLSVPTDSGTTDVDYDEEQKANEACALPFASTSSEGSNSADNIASLSAQQEAQHRRQRSKSISLRKAKKKPSPPTRSVSLVKDEPGLLPEGGSALPKDQRPKSLCLSLEHQGHHSSHPDAQGHPAIPNHKDPESTQFSHHWYLTDWKSGDTYQSLSSSSTATGTTVIECTQVQGSSESLASPSTSRATTPSQLSIEVEAREISSPGRPPGLMSPSSGYSSQSETPTPTVSMSLTLGHLPPPSSSVRVRPVVPERKSSLPPTSPMEKFPKSRLSFDLPLTSSPNLDLSGMSISIRSKTKVSRHHSETNFGVKLAQKTNPNQPIMPMVTQSDLRSVRLRSVSKSEPEDDIESPEYAEEPRAEEVFTLPERKTKPPVAEKPPVARRPPSLVHKPPSVPEEYALTSPTLAMPPRSSIQHARPLPQDSYTVVRKPKPSSFPDGRSPGESTAPSSLVFTPFASSSDAFFSGTQQPPQGSVEDEGPKVRVLPERISLQSQEEAEKKKGKIPPPVPKKPSVLYLPLTSPTAQMEAYVAEPRLPLSPIITLEEDTKCPATGDDLQSLGQRVTSTPQADSEREASPLGSSVEPGTEEKSLISDKTAEWIAEDDDDVFVASRTTEDLFTVIHRSKRKLLGWKEPGEAFVGGRTSSHSPIKNTAESPISESTATAGSGSSANLDAGRNDDFKALLQKKGSKATPRSRPSAAELLKTTNPLARRIIAQFSKDYETTDNPST.

9 disordered regions span residues 161 to 180 (TFRS…PQSA), 193 to 213 (QLSE…SLSL), 291 to 371 (NFSQ…ESMG), 466 to 510 (HMPE…TTDV), 543 to 632 (LSAQ…PEST), 670 to 766 (QGSS…KFPK), 812 to 1009 (KTNP…KKPS), 1042 to 1093 (DTKC…DKTA), and 1128 to 1203 (KEPG…KTTN). Polar residues-rich tracts occupy residues 291-315 (NFSQ…TSDI) and 339-350 (SLTSPVLRTPSS). Ser500 carries the post-translational modification Phosphoserine. Positions 552–568 (RRQRSKSISLRKAKKKP) are enriched in basic residues. Ser576 bears the Phosphoserine mark. Over residues 675-688 (SLASPSTSRATTPS) the composition is skewed to low complexity. Residue Ser691 is modified to Phosphoserine. Polar residues-rich tracts occupy residues 710-730 (SPSS…SMSL) and 812-827 (KTNP…TQSD). The span at 841–851 (PEDDIESPEYA) shows a compositional bias: acidic residues. Basic and acidic residues predominate over residues 852-867 (EEPRAEEVFTLPERKT). Polar residues-rich tracts occupy residues 939 to 968 (GEST…QPPQ) and 1054 to 1065 (SLGQRVTSTPQA). Ser1054 carries the post-translational modification Phosphoserine. Residues 1082 to 1093 (TEEKSLISDKTA) show a composition bias toward basic and acidic residues. Polar residues predominate over residues 1138-1155 (RTSSHSPIKNTAESPISE). Positions 1156–1166 (STATAGSGSSA) are enriched in low complexity.

The protein belongs to the NHS family.

The sequence is that of NHS-like protein 2 from Homo sapiens (Human).